A 225-amino-acid chain; its full sequence is MKGLVIFFCLFYGCHVAGATGKTIMLFPQKTDTDYVTLKPTERVLNQITVCLKSYTELIKEHSLFSLAMQGSGKDNTLLIYPYPPNNISISIHNEDIYFKVDPEVLQWKRTCVTWDSKTGLLQLWINGKLYPRRITKSRSPIGPQISVILGQEQDSYGGSFDINQAFVGEMSDVNVWDYVLPPENIKAYFSDDYTLDGNFYSWDGGNYTINGLIVVLRNQFIPKL.

The first 19 residues, 1–19 (MKGLVIFFCLFYGCHVAGA), serve as a signal peptide directing secretion. One can recognise a Pentraxin (PTX) domain in the interval 21–223 (GKTIMLFPQK…IVVLRNQFIP (203 aa)). Cysteines 51 and 112 form a disulfide. Asp75 and Asn76 together coordinate Ca(2+). An N-linked (GlcNAc...) asparagine glycan is attached at Asn87. 4 residues coordinate Ca(2+): Glu153, Gln154, Asp155, and Gln165. A glycan (N-linked (GlcNAc...) asparagine) is linked at Asn207.

In terms of assembly, homodecamer consisting of two homopentamer units. Pentraxin (or pentaxin) have a discoid arrangement of 5 non-covalently bound subunits. It depends on Ca(2+) as a cofactor. In terms of processing, glycosylated. As to expression, oviduct. Highest expression levels were detected in the pars convoluta with lower levels detected in the pars recta. No expression was detected in the pars uterina.

The protein localises to the secreted. Its function is as follows. Calcium-dependent beta-galactose specific lectin. This chain is Jeltraxin, found in Lepidobatrachus laevis (Budgett's frog).